The primary structure comprises 380 residues: Pregnancy-associated glycoprotein 4 (380 aa).

The first 15 residues, 1–15 (MKWLVLLGLVAFSEC), serve as a signal peptide directing secretion. A propeptide spans 16 to 53 (IFKIPLRRVKTMRKTLSGKNMLNDVLKEHPYRLPQISF) (activation peptide). Residues 71-377 (YVGNITIGTP…DRGNDRIGLA (307 aa)) enclose the Peptidase A1 domain. A glycan (N-linked (GlcNAc...) asparagine) is linked at asparagine 74. Residue aspartate 89 is part of the active site. Cysteine 102 and cysteine 107 form a disulfide bridge. Residue asparagine 125 is glycosylated (N-linked (GlcNAc...) asparagine). Cysteine 261 and cysteine 265 are oxidised to a cystine. Residue aspartate 270 is part of the active site. The cysteines at positions 303 and 337 are disulfide-linked.

The protein belongs to the peptidase A1 family. As to expression, trophoblast and placental tissue. Produced specifically in the invasive binucleate cells of the placenta.

Its subcellular location is the secreted. It localises to the extracellular space. The protein is Pregnancy-associated glycoprotein 4 of Ovis aries (Sheep).